The following is a 359-amino-acid chain: Type-1 angiotensin II receptor B (359 aa).

Over M1 to N25 the chain is Extracellular. An N-linked (GlcNAc...) asparagine glycan is attached at N4. 2 residues coordinate angiotensin II: Q15 and D17. 2 disulfide bridges follow: C18-C274 and C101-C180. A helical transmembrane segment spans residues Y26–F55. Residues Y56–T61 lie on the Cytoplasmic side of the membrane. The chain crosses the membrane as a helical span at residues V62–A89. At M90 to N98 the chain is on the extracellular side. A helical membrane pass occupies residues H99–D125. Topologically, residues R126–T141 are cytoplasmic. Residues M142–I165 form a helical membrane-spanning segment. The Extracellular portion of the chain corresponds to H166 to T190. An angiotensin II-binding site is contributed by R167. A glycan (N-linked (GlcNAc...) asparagine) is linked at N176. The angiotensin II site is built by F182, H183, and Y184. N188 is a glycosylation site (N-linked (GlcNAc...) asparagine). Residues L191 to T216 traverse the membrane as a helical segment. An angiotensin II-binding site is contributed by K199. The Cytoplasmic segment spans residues L217–F239. A helical transmembrane segment spans residues R240–L268. Over G269–D278 the chain is Extracellular. Residues V279–F304 form a helical membrane-spanning segment. Residues L305–E359 are Cytoplasmic-facing. C355 carries S-palmitoyl cysteine lipidation.

Belongs to the G-protein coupled receptor 1 family. As to quaternary structure, interacts with MAS1. Interacts with ARRB1. Interacts with FLNA (via filamin repeat 21); increases PKA-mediated phosphorylation of FLNA. In terms of processing, C-terminal Ser or Thr residues may be phosphorylated.

The protein resides in the cell membrane. Functionally, receptor for angiotensin II, a vasoconstricting peptide, which acts as a key regulator of blood pressure and sodium retention by the kidney. The activated receptor in turn couples to G-alpha proteins G(q) (GNAQ, GNA11, GNA14 or GNA15) and thus activates phospholipase C and increases the cytosolic Ca(2+) concentrations, which in turn triggers cellular responses such as stimulation of protein kinase C. This is Type-1 angiotensin II receptor B (Agtr1b) from Mus musculus (Mouse).